The sequence spans 114 residues: Large ribosomal subunit protein uL22 (114 aa).

It belongs to the universal ribosomal protein uL22 family. In terms of assembly, part of the 50S ribosomal subunit.

In terms of biological role, this protein binds specifically to 23S rRNA; its binding is stimulated by other ribosomal proteins, e.g. L4, L17, and L20. It is important during the early stages of 50S assembly. It makes multiple contacts with different domains of the 23S rRNA in the assembled 50S subunit and ribosome. Its function is as follows. The globular domain of the protein is located near the polypeptide exit tunnel on the outside of the subunit, while an extended beta-hairpin is found that lines the wall of the exit tunnel in the center of the 70S ribosome. This Streptococcus pyogenes serotype M5 (strain Manfredo) protein is Large ribosomal subunit protein uL22.